Here is a 146-residue protein sequence, read N- to C-terminus: 3-dehydroquinate dehydratase (146 aa).

Tyrosine 23 (proton acceptor) is an active-site residue. Substrate is bound by residues asparagine 79, histidine 85, and aspartate 92. The Proton donor role is filled by histidine 105. Substrate-binding positions include 106 to 107 (IS) and arginine 116.

This sequence belongs to the type-II 3-dehydroquinase family. Homododecamer.

It catalyses the reaction 3-dehydroquinate = 3-dehydroshikimate + H2O. The protein operates within metabolic intermediate biosynthesis; chorismate biosynthesis; chorismate from D-erythrose 4-phosphate and phosphoenolpyruvate: step 3/7. Catalyzes a trans-dehydration via an enolate intermediate. The polypeptide is 3-dehydroquinate dehydratase (Variovorax paradoxus (strain S110)).